A 31-amino-acid polypeptide reads, in one-letter code: Cyclotide mden-M (31 aa).

A cross-link (cyclopeptide (Gly-Asn)) is located at residues 1–31; the sequence is GTIPCGESCVYIPCITSALGCSCKKKVCYKN. Disulfide bonds link cysteine 5/cysteine 21, cysteine 9/cysteine 23, and cysteine 14/cysteine 28.

This sequence belongs to the cyclotide family. Bracelet subfamily. In terms of processing, this is a cyclic peptide.

In terms of biological role, probably participates in a plant defense mechanism. The sequence is that of Cyclotide mden-M from Melicytus dentatus (Tree violet).